We begin with the raw amino-acid sequence, 164 residues long: UPF0114 protein Sbal_0780 (164 aa).

4 consecutive transmembrane segments (helical) span residues 15 to 35 (IMAPIYLGLSLILFALGVKFF), 53 to 73 (LVLLTLSLIDITLVGGLIVMV), 109 to 129 (VAASIVAISSIHLLKVFMNAE), and 136 to 156 (IMWYLLIHITFVLSAFAMGYL).

It belongs to the UPF0114 family.

The protein resides in the cell membrane. This chain is UPF0114 protein Sbal_0780, found in Shewanella baltica (strain OS155 / ATCC BAA-1091).